The primary structure comprises 570 residues: Urease subunit alpha 1 (570 aa).

The Urease domain occupies 131–570; sequence GGIDTHVHFI…VPMAQRYFLF (440 aa). Ni(2+)-binding residues include His136, His138, and Lys219. At Lys219 the chain carries N6-carboxylysine. A substrate-binding site is contributed by His221. Residues His248 and His274 each coordinate Ni(2+). His322 (proton donor) is an active-site residue. Asp362 contacts Ni(2+).

Belongs to the metallo-dependent hydrolases superfamily. Urease alpha subunit family. In terms of assembly, heterotrimer of UreA (gamma), UreB (beta) and UreC (alpha) subunits. Three heterotrimers associate to form the active enzyme. Ni cation is required as a cofactor. Carboxylation allows a single lysine to coordinate two nickel ions.

The protein resides in the cytoplasm. The catalysed reaction is urea + 2 H2O + H(+) = hydrogencarbonate + 2 NH4(+). The protein operates within nitrogen metabolism; urea degradation; CO(2) and NH(3) from urea (urease route): step 1/1. This Brucella melitensis biotype 1 (strain ATCC 23456 / CCUG 17765 / NCTC 10094 / 16M) protein is Urease subunit alpha 1.